The sequence spans 405 residues: Alpha-N-acetylgalactosaminidase (405 aa).

Cystine bridges form between Cys-21-Cys-63, Cys-25-Cys-32, and Cys-111-Cys-142. Substrate contacts are provided by residues 61-62 (DD) and Lys-138. Asp-140 functions as the Nucleophile in the catalytic mechanism. An N-linked (GlcNAc...) asparagine glycan is attached at Asn-161. A disulfide bridge connects residues Cys-171 and Cys-193. Ser-172 provides a ligand contact to substrate. N-linked (GlcNAc...) asparagine glycosylation is present at Asn-185. 2 residues coordinate substrate: Arg-197 and Asp-201. Residue Asp-201 is the Proton donor of the active site. The N-linked (GlcNAc...) asparagine glycan is linked to Asn-369.

This sequence belongs to the glycosyl hydrolase 27 family. In terms of assembly, homodimer.

The protein localises to the lysosome. It catalyses the reaction Cleavage of non-reducing alpha-(1-&gt;3)-N-acetylgalactosamine residues from human blood group A and AB mucin glycoproteins, Forssman hapten and blood group A lacto series glycolipids.. The enzyme catalyses a neolactoside IV(3)-alpha-GalNAc,IV(2)-alpha-Fuc-nLc4Cer(d18:1(4E)) + H2O = a neolactoside IV(2)-alpha-Fuc-nLc4Cer(d18:1(4E)) + N-acetyl-alpha-D-galactosamine. The catalysed reaction is a neolactoside IV(3)-alpha-GalNAc,IV(2)-alpha-Fuc-nLc4Cer(d18:0) + H2O = a neolactoside IV(2)-alpha-Fuc-nLc4Cer(d18:0) + N-acetyl-alpha-D-galactosamine. It carries out the reaction a globoside IV3GalNAc-Gb4Cer + H2O = N-acetyl-alpha-D-galactosamine + a globoside Gb4Cer. Functionally, removes terminal alpha-N-acetylgalactosamine residues from glycolipids and glycopeptides. Required for the breakdown of glycolipids. The sequence is that of Alpha-N-acetylgalactosaminidase (NAGA) from Gallus gallus (Chicken).